Consider the following 370-residue polypeptide: 2-Hydroxyacid oxidase 1 (370 aa).

An FMN hydroxy acid dehydrogenase domain is found at 1 to 365; sequence MLPRLVCISD…DKTLVRKNPL (365 aa). Residue Tyr-26 coordinates glyoxylate. Residues 79 to 81, Ser-108, and Gln-130 each bind FMN; that span reads ATA. Glyoxylate is bound at residue Tyr-132. Thr-158 serves as a coordination point for FMN. Arg-167 is a glyoxylate binding site. Residue Lys-184 is modified to N6-succinyllysine. Residues Ser-194 and Ser-230 each carry the phosphoserine modification. Residues Lys-236 and Ser-258 each coordinate FMN. Glyoxylate contacts are provided by His-260 and Arg-263. The active-site Proton acceptor is the His-260. Residues 291-295 and 314-315 contribute to the FMN site; these read DGGVR and GR. A Microbody targeting signal motif is present at residues 368-370; it reads SKI.

It belongs to the FMN-dependent alpha-hydroxy acid dehydrogenase family. In terms of assembly, homotetramer. FMN serves as cofactor. In terms of tissue distribution, liver.

The protein resides in the peroxisome matrix. The enzyme catalyses a (2S)-2-hydroxycarboxylate + O2 = a 2-oxocarboxylate + H2O2. It carries out the reaction glycolate + O2 = glyoxylate + H2O2. It catalyses the reaction glyoxylate + O2 + H2O = oxalate + H2O2 + H(+). The catalysed reaction is 2-hydroxyhexadecanoate + O2 = 2-oxohexadecanoate + H2O2. The enzyme catalyses 2-hydroxyoctanoate + O2 = 2-oxooctanoate + H2O2. It functions in the pathway amino-acid biosynthesis; glycine biosynthesis. In terms of biological role, broad substrate specificity (S)-2-hydroxy-acid oxidase that preferentially oxidizes glycolate. The glyoxylate produced by the oxidation of glycolate can then be utilized by alanine-glyoxylate aminotransferase for the peroxisomal synthesis of glycine; this pathway appears to be an important step for the detoxification of glyoxylate which, if allowed to accumulate, may be metabolized to oxalate with formation of kidney stones. Can also catalyze the oxidation glyoxylate, and long chain hydroxyacids such as 2-hydroxyhexadecanoate and 2-hydroxyoctanoate. Active in vitro with the artificial electron acceptor 2,6-dichlorophenolindophenol (DCIP), but O2 is believed to be the physiological electron acceptor, leading to the production of H2O2. The sequence is that of 2-Hydroxyacid oxidase 1 from Mus musculus (Mouse).